Here is a 447-residue protein sequence, read N- to C-terminus: MTRKYFGTDGVRGKVGESPITPDFVMRLGHAAGKVLAHGASTGQGRPTVLIGKDTRISGYMLEAALEAGFTSAGVHVLLTGPLPTPGIAYLTRALRLSAGVVISASHNPYYDNGIKFFSADGDKLPDEVEAKIEAALEEPMTCAPSDDLGRARRINDAPGRYIEFCKSTFPNSQDLRGLKLVVDCAHGAAYHIAPHVFHELGADVIAIGNQPDGRNINDGYGATAPGKLIEAVREHGADLGLAFDGDADRLQVVDSEGRLYNGDELLYLIVRDRMAAGFAVEGAVGTLMTNMAVELALKRIGVEFVRAKVGDRYVLEELNKRHWTLGGEGSGHLLCLDRHSTGDGIVSALQVLAALRRSGKTLAGLLDGVSLFPQKLINVRVEKGFDWQSHAGLKAARAVVEPELAGRGRVLIRASGTEPVVRVMVEAEHAETAERAAQTLAEALRA.

Serine 106 functions as the Phosphoserine intermediate in the catalytic mechanism. Positions 106, 245, 247, and 249 each coordinate Mg(2+). Phosphoserine is present on serine 106.

The protein belongs to the phosphohexose mutase family. Mg(2+) is required as a cofactor. In terms of processing, activated by phosphorylation.

The enzyme catalyses alpha-D-glucosamine 1-phosphate = D-glucosamine 6-phosphate. In terms of biological role, catalyzes the conversion of glucosamine-6-phosphate to glucosamine-1-phosphate. In Cupriavidus pinatubonensis (strain JMP 134 / LMG 1197) (Cupriavidus necator (strain JMP 134)), this protein is Phosphoglucosamine mutase.